Here is a 407-residue protein sequence, read N- to C-terminus: Imidazolonepropionase (407 aa).

2 residues coordinate Fe(3+): histidine 74 and histidine 76. Residues histidine 74 and histidine 76 each contribute to the Zn(2+) site. 4-imidazolone-5-propanoate-binding residues include arginine 83, tyrosine 146, and histidine 179. Tyrosine 146 is a binding site for N-formimidoyl-L-glutamate. Histidine 244 is a binding site for Fe(3+). Histidine 244 provides a ligand contact to Zn(2+). Glutamine 247 contacts 4-imidazolone-5-propanoate. Aspartate 319 provides a ligand contact to Fe(3+). Residue aspartate 319 coordinates Zn(2+). Residues asparagine 321 and glycine 323 each contribute to the N-formimidoyl-L-glutamate site. Position 324 (threonine 324) interacts with 4-imidazolone-5-propanoate.

It belongs to the metallo-dependent hydrolases superfamily. HutI family. Zn(2+) is required as a cofactor. The cofactor is Fe(3+).

It is found in the cytoplasm. The enzyme catalyses 4-imidazolone-5-propanoate + H2O = N-formimidoyl-L-glutamate. The protein operates within amino-acid degradation; L-histidine degradation into L-glutamate; N-formimidoyl-L-glutamate from L-histidine: step 3/3. Catalyzes the hydrolytic cleavage of the carbon-nitrogen bond in imidazolone-5-propanoate to yield N-formimidoyl-L-glutamate. It is the third step in the universal histidine degradation pathway. The protein is Imidazolonepropionase of Salmonella typhimurium (strain LT2 / SGSC1412 / ATCC 700720).